We begin with the raw amino-acid sequence, 610 residues long: Protein Smaug homolog 1 (610 aa).

Residue Ser67 is modified to Phosphoserine. Disordered regions lie at residues 177-222 (ARGP…EEGS), 318-366 (SSPS…LQPP), and 464-487 (NRGF…GRRN). Residues 222-295 (SGMKDVPAWL…LKSLERDIIE (74 aa)) enclose the SAM domain. Phosphoserine is present on Ser319. Residue Thr323 is modified to Phosphothreonine. Over residues 344–358 (SAATVTSATASASAG) the composition is skewed to low complexity. Arg465 carries the omega-N-methylarginine modification. Positions 467-480 (FGQSNSLPTASSVG) are enriched in polar residues. Ser472 carries the post-translational modification Phosphoserine.

The protein belongs to the SMAUG family. Expressed in brain (at protein level).

The protein resides in the cytoplasm. The protein localises to the cell projection. It localises to the dendrite. Its subcellular location is the synapse. It is found in the synaptosome. Its function is as follows. Acts as a translational repressor of SRE-containing messengers. The sequence is that of Protein Smaug homolog 1 (Samd4a) from Rattus norvegicus (Rat).